A 568-amino-acid chain; its full sequence is Type 2 DNA topoisomerase 6 subunit B (568 aa).

ATP contacts are provided by residues Asn46, Asp78, 99-100 (TK), 109-116 (GQQGIGIS), and Lys473.

The protein belongs to the TOP6B family. As to quaternary structure, homodimer. Heterotetramer of two Top6A and two Top6B chains.

The catalysed reaction is ATP-dependent breakage, passage and rejoining of double-stranded DNA.. Its function is as follows. Relaxes both positive and negative superturns and exhibits a strong decatenase activity. The protein is Type 2 DNA topoisomerase 6 subunit B of Pyrococcus furiosus (strain ATCC 43587 / DSM 3638 / JCM 8422 / Vc1).